A 261-amino-acid chain; its full sequence is Cytochrome c oxidase subunit 3 (261 aa).

Residues 1–15 (MTHQTHAYHMVNPSP) lie on the Mitochondrial matrix side of the membrane. The chain crosses the membrane as a helical span at residues 16-34 (WPLTGALSALLMTSGLIMW). Topologically, residues 35-40 (FHFNST) are mitochondrial intermembrane. The chain crosses the membrane as a helical span at residues 41–66 (TLLMLGLTTNMLTMYQWWRDVVREST). Residues 67-72 (FQGHHT) lie on the Mitochondrial matrix side of the membrane. The chain crosses the membrane as a helical span at residues 73–105 (PNVQKGLRYGMILFIISEVLFFTGFFWAFYHSS). Residues 106–128 (LAPTPELGGCWPPTGIHPLNPLE) lie on the Mitochondrial intermembrane side of the membrane. Residues 129-152 (VPLLNTSVLLASGVSITWAHHSLM) traverse the membrane as a helical segment. Residues 153–155 (EGN) are Mitochondrial matrix-facing. Residues 156-183 (RNHMLQALFITIALGVYFTLLQASEYYE) traverse the membrane as a helical segment. At 184–190 (APFTISD) the chain is on the mitochondrial intermembrane side. A helical membrane pass occupies residues 191–223 (GVYGSTFFVATGFHGLHVIIGSTFLIVCFFRQL). Residues 224 to 232 (KFHFTSSHH) lie on the Mitochondrial matrix side of the membrane. A helical transmembrane segment spans residues 233-256 (FGFEAAAWYWHFVDVVWLFLYVSI). The Mitochondrial intermembrane segment spans residues 257–261 (YWWGS).

It belongs to the cytochrome c oxidase subunit 3 family. As to quaternary structure, component of the cytochrome c oxidase (complex IV, CIV), a multisubunit enzyme composed of 14 subunits. The complex is composed of a catalytic core of 3 subunits MT-CO1, MT-CO2 and MT-CO3, encoded in the mitochondrial DNA, and 11 supernumerary subunits COX4I, COX5A, COX5B, COX6A, COX6B, COX6C, COX7A, COX7B, COX7C, COX8 and NDUFA4, which are encoded in the nuclear genome. The complex exists as a monomer or a dimer and forms supercomplexes (SCs) in the inner mitochondrial membrane with NADH-ubiquinone oxidoreductase (complex I, CI) and ubiquinol-cytochrome c oxidoreductase (cytochrome b-c1 complex, complex III, CIII), resulting in different assemblies (supercomplex SCI(1)III(2)IV(1) and megacomplex MCI(2)III(2)IV(2)).

Its subcellular location is the mitochondrion inner membrane. It carries out the reaction 4 Fe(II)-[cytochrome c] + O2 + 8 H(+)(in) = 4 Fe(III)-[cytochrome c] + 2 H2O + 4 H(+)(out). Its function is as follows. Component of the cytochrome c oxidase, the last enzyme in the mitochondrial electron transport chain which drives oxidative phosphorylation. The respiratory chain contains 3 multisubunit complexes succinate dehydrogenase (complex II, CII), ubiquinol-cytochrome c oxidoreductase (cytochrome b-c1 complex, complex III, CIII) and cytochrome c oxidase (complex IV, CIV), that cooperate to transfer electrons derived from NADH and succinate to molecular oxygen, creating an electrochemical gradient over the inner membrane that drives transmembrane transport and the ATP synthase. Cytochrome c oxidase is the component of the respiratory chain that catalyzes the reduction of oxygen to water. Electrons originating from reduced cytochrome c in the intermembrane space (IMS) are transferred via the dinuclear copper A center (CU(A)) of subunit 2 and heme A of subunit 1 to the active site in subunit 1, a binuclear center (BNC) formed by heme A3 and copper B (CU(B)). The BNC reduces molecular oxygen to 2 water molecules using 4 electrons from cytochrome c in the IMS and 4 protons from the mitochondrial matrix. The sequence is that of Cytochrome c oxidase subunit 3 (MT-CO3) from Gazella spekei (Speke's gazelle).